Consider the following 174-residue polypeptide: Centrosomal protein 20 (174 aa).

A necessary and sufficient for homooligomerization and localization to centrosomes and pericentriolar satellites region spans residues methionine 1–isoleucine 104. Residues glutamate 49–valine 81 form the LisH domain. The tract at residues glycine 129–arginine 174 is disordered. Serine 144 is modified (phosphoserine). The span at lysine 147–histidine 167 shows a compositional bias: basic and acidic residues.

It belongs to the CEP43 family. Homooligomer; probably required for localization to centrosomes. Forms a complex with KIAA0753/OFIP and OFD1; within this complex may stabilize the interaction between OFD1 and KIAA0753/OFIP. Interacts with PCM1; this interaction may be mediated by KIAA0753/OFIP. Interacts with PLK1 in later G1, S, G2 and M phases of the cell cycle; this interaction recruits PLK1 to centrosomes. Widely expressed. Detected in brain, heart, kidney, liver, lung, skeletal muscle, placenta and intestine.

The protein localises to the cytoplasm. Its subcellular location is the cytoskeleton. The protein resides in the microtubule organizing center. It is found in the centrosome. It localises to the centriole. The protein localises to the cell projection. Its subcellular location is the cilium. The protein resides in the cilium basal body. It is found in the cytoplasmic granule. It localises to the centriolar satellite. In terms of biological role, involved in the biogenesis of cilia. Required for the recruitment of PLK1 to centrosomes and S phase progression. The protein is Centrosomal protein 20 of Homo sapiens (Human).